A 500-amino-acid chain; its full sequence is Bifunctional protein GlmU (500 aa).

A pyrophosphorylase region spans residues 1-242 (MPVQTAVVVL…SAKVAGANDR (242 aa)). UDP-N-acetyl-alpha-D-glucosamine contacts are provided by residues 10-13 (LAAG), lysine 24, glutamine 81, and 86-87 (GT). A Mg(2+)-binding site is contributed by aspartate 112. 4 residues coordinate UDP-N-acetyl-alpha-D-glucosamine: glycine 151, glutamate 167, asparagine 182, and asparagine 240. Residue asparagine 240 participates in Mg(2+) binding. The interval 243–263 (VQLSRLAAELNRRTVENWMRA) is linker. An N-acetyltransferase region spans residues 264–500 (GVTVVDPSTT…KQDLKDGIEQ (237 aa)). The UDP-N-acetyl-alpha-D-glucosamine site is built by arginine 345 and lysine 363. The Proton acceptor role is filled by histidine 375. The UDP-N-acetyl-alpha-D-glucosamine site is built by tyrosine 378 and asparagine 389. Residues alanine 392, 398–399 (NY), serine 417, and alanine 435 contribute to the acetyl-CoA site. The interval 459–500 (DGWVQRNRPGTPAAEAASAAGPHHSSDLHETEKQDLKDGIEQ) is disordered. Positions 482–500 (HSSDLHETEKQDLKDGIEQ) are enriched in basic and acidic residues.

The protein in the N-terminal section; belongs to the N-acetylglucosamine-1-phosphate uridyltransferase family. It in the C-terminal section; belongs to the transferase hexapeptide repeat family. Homotrimer. The cofactor is Mg(2+).

Its subcellular location is the cytoplasm. The enzyme catalyses alpha-D-glucosamine 1-phosphate + acetyl-CoA = N-acetyl-alpha-D-glucosamine 1-phosphate + CoA + H(+). The catalysed reaction is N-acetyl-alpha-D-glucosamine 1-phosphate + UTP + H(+) = UDP-N-acetyl-alpha-D-glucosamine + diphosphate. The protein operates within nucleotide-sugar biosynthesis; UDP-N-acetyl-alpha-D-glucosamine biosynthesis; N-acetyl-alpha-D-glucosamine 1-phosphate from alpha-D-glucosamine 6-phosphate (route II): step 2/2. It participates in nucleotide-sugar biosynthesis; UDP-N-acetyl-alpha-D-glucosamine biosynthesis; UDP-N-acetyl-alpha-D-glucosamine from N-acetyl-alpha-D-glucosamine 1-phosphate: step 1/1. Its pathway is bacterial outer membrane biogenesis; LPS lipid A biosynthesis. Its function is as follows. Catalyzes the last two sequential reactions in the de novo biosynthetic pathway for UDP-N-acetylglucosamine (UDP-GlcNAc). The C-terminal domain catalyzes the transfer of acetyl group from acetyl coenzyme A to glucosamine-1-phosphate (GlcN-1-P) to produce N-acetylglucosamine-1-phosphate (GlcNAc-1-P), which is converted into UDP-GlcNAc by the transfer of uridine 5-monophosphate (from uridine 5-triphosphate), a reaction catalyzed by the N-terminal domain. This is Bifunctional protein GlmU from Rhodococcus opacus (strain B4).